The primary structure comprises 178 residues: Cytidylate kinase (178 aa).

7 to 15 (GLPGSGTTS) serves as a coordination point for ATP.

The protein belongs to the cytidylate kinase family. Type 2 subfamily.

The protein resides in the cytoplasm. The catalysed reaction is CMP + ATP = CDP + ADP. The enzyme catalyses dCMP + ATP = dCDP + ADP. This is Cytidylate kinase from Methanospirillum hungatei JF-1 (strain ATCC 27890 / DSM 864 / NBRC 100397 / JF-1).